Reading from the N-terminus, the 274-residue chain is Mitogen-activated protein kinase 4 (274 aa).

Residues 1-8 (GCGGNGLV) and Lys23 each bind ATP. The Protein kinase domain maps to 1 to 274 (GCGGNGLVLS…KILTFSPMDR (274 aa)). Asp123 functions as the Proton acceptor in the catalytic mechanism. At Ser160 the chain carries Phosphoserine. The SEG motif motif lies at 160–162 (SEG).

Belongs to the protein kinase superfamily. CMGC Ser/Thr protein kinase family. MAP kinase subfamily. Homodimer. Heterodimer with ERK3/MAPK6. Interacts with MAPKAPK5. It depends on Mg(2+) as a cofactor. Phosphorylated by PAK1, PAK2 and PAK3 in the activation loop resulting in catalytic activation. Phosphorylated by MAPKAPK5 at other sites. As to expression, exclusively detected in the brain, where expression is restricted to the choroid plexus and hippocampus, and to a lesser extent in lung.

Its subcellular location is the cytoplasm. The protein resides in the nucleus. The catalysed reaction is L-seryl-[protein] + ATP = O-phospho-L-seryl-[protein] + ADP + H(+). It catalyses the reaction L-threonyl-[protein] + ATP = O-phospho-L-threonyl-[protein] + ADP + H(+). With respect to regulation, activated by phosphorylation in the activation loop. Atypical MAPK protein. Phosphorylates microtubule-associated protein 2 (MAP2) and MAPKAPK5. The precise role of the complex formed with MAPKAPK5 is still unclear, but the complex follows a complex set of phosphorylation events: upon interaction with atypical MAPKAPK5, ERK4/MAPK4 is phosphorylated and then mediates phosphorylation and activation of MAPKAPK5, which in turn phosphorylates ERK4/MAPK4. May promote entry in the cell cycle. The protein is Mitogen-activated protein kinase 4 (Mapk4) of Rattus norvegicus (Rat).